The following is a 629-amino-acid chain: Pescadillo homolog (629 aa).

The BRCT domain occupies 321 to 414 (RLRTLFKGLK…QLLPTNKYFI (94 aa)). 3 disordered regions span residues 439–470 (KALL…ETVD), 488–568 (EYKK…MVKP), and 598–629 (IEAS…KLGK). Phosphoserine is present on residues Ser-453 and Ser-457. Acidic residues-rich tracts occupy residues 454-470 (DEDS…ETVD) and 498-523 (VNED…EELD). The segment covering 524 to 535 (EKSKRLQEEKQK) has biased composition (basic and acidic residues). The span at 542–551 (KVHKVNKRQV) shows a compositional bias: basic residues. Composition is skewed to basic and acidic residues over residues 552–561 (HKAEVDEHRL) and 598–617 (IEAS…RKEA). Residues 584–627 (KEKEEWLLRKKRRTIEASEKEARKTAKREARKEAAAAAAKASKL) are a coiled coil. Residues 618-629 (AAAAAKASKLGK) are compositionally biased toward low complexity.

Belongs to the pescadillo family.

It is found in the nucleus. Its subcellular location is the nucleolus. It localises to the nucleoplasm. Required for maturation of ribosomal RNAs and formation of the large ribosomal subunit. The protein is Pescadillo homolog of Drosophila erecta (Fruit fly).